Reading from the N-terminus, the 217-residue chain is SCRKKASQLNLTPEQQRFDPRYIELVIVADHSMVTKYDGDLAAIRTWAHQLVNNIIVFYRDLNVHITLSAVEVWTNGDLINVQPAASVTLNLFGEWRERDLLNRRMHDHAQLLTAINLDDNTIGLAYNEGMCDPKYSVGIVQDHSAINRMVAATMAHEIGHNLGMDHDGNQCNCGANGCVMSAVITQQRSYQFSDCSKNKYQTYLTNHNPQCILNQP.

Positions 1–14 (SCRKKASQLNLTPE) are excised as a propeptide. Glutamine 15 carries the pyrrolidone carboxylic acid modification. Positions 21 to 217 (RYIELVIVAD…HNPQCILNQP (197 aa)) constitute a Peptidase M12B domain. The Ca(2+) site is built by glutamate 24 and aspartate 108. 3 cysteine pairs are disulfide-bonded: cysteine 132–cysteine 212, cysteine 172–cysteine 196, and cysteine 174–cysteine 179. A Zn(2+)-binding site is contributed by histidine 157. Glutamate 158 is a catalytic residue. Histidine 161 and histidine 167 together coordinate Zn(2+). Ca(2+) is bound by residues cysteine 212 and asparagine 215.

The protein belongs to the venom metalloproteinase (M12B) family. P-I subfamily. As to quaternary structure, monomer. The cofactor is Zn(2+). In terms of tissue distribution, expressed by the venom gland.

Its subcellular location is the secreted. Fibrinolytic and caseinolytic activities are inhibited by Cd(2+), Cu(2+) and Co(2+) ions. Not inhibited by Mg(2+), Ca(2+) and Ba(2+). Also inhibited by EDTA, EGTA and 1,10-phenanthroline. Its function is as follows. Snake venom zinc metalloprotease that hydrolyzes the Aalpha-chain and more slowly the Bbeta-chain of fibrin and fibrinogen. Also hydrolyzes casein and B-chain of oxidized insulin. Its fibrinolytic activity is direct, without any plasminogen activation. Inhibits ADP-induced and collagen-induced platelet aggregation. Shows low hemorrhagic activity. Cleaves the plasma proteinase inhibitors alpha(2)-macroglobulin (A2M) and alpha(2)M-related pregnancy zone protein (PZP), and is inhibited by them. The protein is Snake venom metalloproteinase lebetase-4 of Macrovipera lebetinus (Levantine viper).